Reading from the N-terminus, the 371-residue chain is Histidinol-phosphate aminotransferase (371 aa).

Residue Lys-228 is modified to N6-(pyridoxal phosphate)lysine.

The protein belongs to the class-II pyridoxal-phosphate-dependent aminotransferase family. Histidinol-phosphate aminotransferase subfamily. Pyridoxal 5'-phosphate serves as cofactor.

The catalysed reaction is L-histidinol phosphate + 2-oxoglutarate = 3-(imidazol-4-yl)-2-oxopropyl phosphate + L-glutamate. The protein operates within amino-acid biosynthesis; L-histidine biosynthesis; L-histidine from 5-phospho-alpha-D-ribose 1-diphosphate: step 7/9. The sequence is that of Histidinol-phosphate aminotransferase from Methanococcus aeolicus (strain ATCC BAA-1280 / DSM 17508 / OCM 812 / Nankai-3).